Here is a 578-residue protein sequence, read N- to C-terminus: A-type ATP synthase subunit A (578 aa).

Position 228–235 (228–235) interacts with ATP; it reads GPFGSGKT.

Belongs to the ATPase alpha/beta chains family. As to quaternary structure, has multiple subunits with at least A(3), B(3), C, D, E, F, G, I and proteolipid K(x).

The protein resides in the cell membrane. The catalysed reaction is ATP + H2O + 4 H(+)(in) = ADP + phosphate + 5 H(+)(out). ATP hydrolysis stimulated by sulfite, ethanol, glycerol, magnesium and zinc ions, inhibited by diethylstilbestrol (DES) and less well by N,N-dicyclohexylcarbodiimide (DCCD). In terms of biological role, component of the A-type ATP synthase that produces ATP from ADP in the presence of a proton gradient across the membrane. The A chain is the catalytic subunit. This chain is A-type ATP synthase subunit A, found in Methanosarcina mazei (strain ATCC BAA-159 / DSM 3647 / Goe1 / Go1 / JCM 11833 / OCM 88) (Methanosarcina frisia).